A 548-amino-acid polypeptide reads, in one-letter code: uncharacterized protein (548 aa).

Short-chain dehydrogenase/reductase regions lie at residues 1-250 (MDDR…WMSV) and 271-548 (PVED…LLSP). 12 to 37 (IVVTGAAGGIGRALVDIFAANGDVVV) lines the NADP(+) pocket. Serine 141 lines the substrate pocket. Tyrosine 154 acts as the Proton acceptor in catalysis. 280–304 (VIVMGGATGVGAAIARRFAENGDTV) contacts NADP(+). The active-site Proton acceptor is the tyrosine 420.

Belongs to the short-chain dehydrogenases/reductases (SDR) family.

This is an uncharacterized protein from Sinorhizobium fredii (strain NBRC 101917 / NGR234).